The following is a 115-amino-acid chain: Histidine-rich carboxyl terminus protein 1 (115 aa).

Residues 9-29 (ALVGWITGAAVAVLLLLLLLA) form a helical membrane-spanning segment. The tract at residues 86–115 (GLHHHHHPRHTPHHLHHHHHPHRHHPRHAR) is disordered. Over residues 87–115 (LHHHHHPRHTPHHLHHHHHPHRHHPRHAR) the composition is skewed to basic residues.

It is found in the membrane. This Homo sapiens (Human) protein is Histidine-rich carboxyl terminus protein 1 (HRCT1).